The primary structure comprises 410 residues: Peptidase T (410 aa).

His77 lines the Zn(2+) pocket. Asp79 is a catalytic residue. A Zn(2+)-binding site is contributed by Asp140. Glu174 serves as the catalytic Proton acceptor. The Zn(2+) site is built by Glu175, Asp197, and His379.

The protein belongs to the peptidase M20B family. It depends on Zn(2+) as a cofactor.

It localises to the cytoplasm. The enzyme catalyses Release of the N-terminal residue from a tripeptide.. In terms of biological role, cleaves the N-terminal amino acid of tripeptides. The polypeptide is Peptidase T (Desulfitobacterium hafniense (strain DSM 10664 / DCB-2)).